The sequence spans 305 residues: MMSFLVSIASIAMLVKIVLGTFANVFIVLVNFTDCIKKRKFLLADRILTVLAIFRFDLLWIILMNWSSSVFHVGLYFQVRFCICVVWIVTNHFNTWLANILSILYLLKIDNFSNLIFLGLKGKIKCPYIVLLPCFVLLFPNLIMVTICETTQANGHQGNLTGKTKLTYFTNLIAMTFTLGSLVPFTTFMICFLLLICSLCKHLRTMRLYGKGSQGPSASTHIKVLQVLISFLLLFSMFILLLIISDYNYTKSLEEPIHLICQVIGTLYPSRHSYILLWGNKRIKQAFVLAMVQVRARFWLKEKKP.

The Extracellular portion of the chain corresponds to 1-9; the sequence is MMSFLVSIA. The chain crosses the membrane as a helical span at residues 10-30; the sequence is SIAMLVKIVLGTFANVFIVLV. Residues 31–46 are Cytoplasmic-facing; the sequence is NFTDCIKKRKFLLADR. The chain crosses the membrane as a helical span at residues 47 to 67; that stretch reads ILTVLAIFRFDLLWIILMNWS. At 68 to 69 the chain is on the extracellular side; it reads SS. A helical membrane pass occupies residues 70–90; sequence VFHVGLYFQVRFCICVVWIVT. At 91–99 the chain is on the cytoplasmic side; that stretch reads NHFNTWLAN. A helical transmembrane segment spans residues 100-120; the sequence is ILSILYLLKIDNFSNLIFLGL. At 121–127 the chain is on the extracellular side; sequence KGKIKCP. A helical transmembrane segment spans residues 128-148; the sequence is YIVLLPCFVLLFPNLIMVTIC. Residues 149–176 are Cytoplasmic-facing; that stretch reads ETTQANGHQGNLTGKTKLTYFTNLIAMT. Residues 177–197 traverse the membrane as a helical segment; that stretch reads FTLGSLVPFTTFMICFLLLIC. The Extracellular segment spans residues 198–223; that stretch reads SLCKHLRTMRLYGKGSQGPSASTHIK. A helical transmembrane segment spans residues 224 to 244; it reads VLQVLISFLLLFSMFILLLII. Residues 245–305 lie on the Cytoplasmic side of the membrane; it reads SDYNYTKSLE…ARFWLKEKKP (61 aa).

Belongs to the G-protein coupled receptor T2R family.

It localises to the membrane. Functionally, putative taste receptor which may play a role in the perception of bitterness. In Mus musculus (Mouse), this protein is Taste receptor type 2 member 136 (Tas2r136).